We begin with the raw amino-acid sequence, 247 residues long: uncharacterized protein (247 aa).

Residues 225 to 247 (LASAPVPPSGSGNSGHRRANLGL) are disordered.

This is an uncharacterized protein from Methanocaldococcus jannaschii (strain ATCC 43067 / DSM 2661 / JAL-1 / JCM 10045 / NBRC 100440) (Methanococcus jannaschii).